Here is a 53-residue protein sequence, read N- to C-terminus: UPF0391 membrane protein GFO_1615 (53 aa).

A run of 2 helical transmembrane segments spans residues 4–24 (LIVI…GGVA) and 27–47 (AADI…ISVL).

This sequence belongs to the UPF0391 family.

The protein resides in the cell membrane. The polypeptide is UPF0391 membrane protein GFO_1615 (Christiangramia forsetii (strain DSM 17595 / CGMCC 1.15422 / KT0803) (Gramella forsetii)).